The chain runs to 315 residues: Glutathione synthetase (315 aa).

One can recognise an ATP-grasp domain in the interval 125–310; sequence KLYTAWFADL…ITGMLMDAIE (186 aa). 151 to 207 provides a ligand contact to ATP; sequence WEKHGDIIMKPLDGMGGASIFRVKEGDPNIGVIAETLTELGNRYCMAQNYLPAIKDG. Positions 281 and 283 each coordinate Mg(2+).

It belongs to the prokaryotic GSH synthase family. Requires Mg(2+) as cofactor. Mn(2+) is required as a cofactor.

It carries out the reaction gamma-L-glutamyl-L-cysteine + glycine + ATP = glutathione + ADP + phosphate + H(+). The protein operates within sulfur metabolism; glutathione biosynthesis; glutathione from L-cysteine and L-glutamate: step 2/2. In Salmonella typhimurium (strain LT2 / SGSC1412 / ATCC 700720), this protein is Glutathione synthetase.